Consider the following 99-residue polypeptide: Acylphosphatase (99 aa).

The Acylphosphatase-like domain maps to 10–99 (RLTAFVHGHV…PRGVEGFTER (90 aa)). Residues Arg25 and Asn43 contribute to the active site.

Belongs to the acylphosphatase family.

The catalysed reaction is an acyl phosphate + H2O = a carboxylate + phosphate + H(+). In Corynebacterium efficiens (strain DSM 44549 / YS-314 / AJ 12310 / JCM 11189 / NBRC 100395), this protein is Acylphosphatase (acyP).